The sequence spans 730 residues: Hepatocyte growth factor (730 aa).

A signal peptide spans 1–31; sequence MWVTKLLPLLVLQQLLLHLLLLPVAVPRAEG. The residue at position 32 (Gln-32) is a Pyrrolidone carboxylic acid. Positions 37-123 constitute a PAN domain; that stretch reads NTLHEFKKSA…HEFDLYENKD (87 aa). 8 disulfides stabilise this stretch: Cys-70–Cys-96, Cys-74–Cys-84, Cys-128–Cys-206, Cys-149–Cys-189, Cys-177–Cys-201, Cys-211–Cys-288, Cys-232–Cys-271, and Cys-260–Cys-283. 2 Kringle domains span residues 128–206 and 211–288; these read CIIG…IPQC and CMTC…IKMC. Asn-294 carries N-linked (GlcNAc...) asparagine glycosylation. 11 cysteine pairs are disulfide-bonded: Cys-305–Cys-383, Cys-326–Cys-365, Cys-354–Cys-377, Cys-391–Cys-469, Cys-412–Cys-452, Cys-440–Cys-464, Cys-487–Cys-606, Cys-519–Cys-535, Cys-614–Cys-681, Cys-644–Cys-660, and Cys-671–Cys-699. 2 consecutive Kringle domains span residues 305–383 and 391–469; these read CIQG…IPKC and CYRG…IFRC. Asn-402 is a glycosylation site (N-linked (GlcNAc...) asparagine). The Peptidase S1 domain maps to 495-723; that stretch reads VVNGIPTRTN…YAKWIHKIIL (229 aa). Residues Asn-568 and Asn-655 are each glycosylated (N-linked (GlcNAc...) asparagine).

This sequence belongs to the peptidase S1 family. Plasminogen subfamily. In terms of assembly, dimer of an alpha chain and a beta chain linked by a disulfide bond. Interacts with SRPX2; the interaction increases HGF mitogenic activity. Post-translationally, the single-chain precursor undergoes proteolytic processing by TMPRSS13 resulting in an active two-chain form. The single-chain precursor undergoes proteolytic processing by HGFAC resulting in an active two-chain form.

Potent mitogen for mature parenchymal hepatocyte cells, seems to be a hepatotrophic factor, and acts as a growth factor for a broad spectrum of tissues and cell types. Activating ligand for the receptor tyrosine kinase MET by binding to it and promoting its dimerization. Activates MAPK signaling following TMPRSS13 cleavage and activation. This is Hepatocyte growth factor (HGF) from Canis lupus familiaris (Dog).